Reading from the N-terminus, the 213-residue chain is Peroxynitrite isomerase (213 aa).

Residues 1–10 (MGADATGDTA) show a composition bias toward low complexity. Residues 1 to 26 (MGADATGDTAARGDRAAHGDTASGGA) form a disordered region. Residues 51-57 (GTWRGEG) carry the GXWXGXG motif. Position 203 (H203) interacts with heme b.

This sequence belongs to the nitrobindin family. Homodimer. Requires heme b as cofactor.

It carries out the reaction peroxynitrite = nitrate. The protein operates within nitrogen metabolism. Functionally, heme-binding protein able to scavenge peroxynitrite and to protect free L-tyrosine against peroxynitrite-mediated nitration, by acting as a peroxynitrite isomerase that converts peroxynitrite to nitrate. Therefore, this protein likely plays a role in peroxynitrite sensing and in the detoxification of reactive nitrogen and oxygen species (RNS and ROS, respectively). Is able to bind nitric oxide (NO) in vitro, but may act as a sensor of peroxynitrite levels in vivo. This Parafrankia sp. (strain EAN1pec) protein is Peroxynitrite isomerase.